The primary structure comprises 248 residues: Eukaryotic translation initiation factor 6 (248 aa).

This sequence belongs to the eIF-6 family. As to quaternary structure, monomer. Associates with the 60S ribosomal subunit.

It is found in the cytoplasm. It localises to the nucleus. Its subcellular location is the nucleolus. Functionally, binds to the 60S ribosomal subunit and prevents its association with the 40S ribosomal subunit to form the 80S initiation complex in the cytoplasm. May also be involved in ribosome biogenesis. This Trypanosoma cruzi (strain CL Brener) protein is Eukaryotic translation initiation factor 6.